The primary structure comprises 334 residues: Aspartate carbamoyltransferase catalytic subunit (334 aa).

Arg70 and Thr71 together coordinate carbamoyl phosphate. Lys98 contributes to the L-aspartate binding site. Arg120, His150, and Gln153 together coordinate carbamoyl phosphate. Residues Arg183 and Arg238 each contribute to the L-aspartate site. Residues Gly279 and Pro280 each contribute to the carbamoyl phosphate site.

Belongs to the aspartate/ornithine carbamoyltransferase superfamily. ATCase family. Heterododecamer (2C3:3R2) of six catalytic PyrB chains organized as two trimers (C3), and six regulatory PyrI chains organized as three dimers (R2).

It carries out the reaction carbamoyl phosphate + L-aspartate = N-carbamoyl-L-aspartate + phosphate + H(+). It participates in pyrimidine metabolism; UMP biosynthesis via de novo pathway; (S)-dihydroorotate from bicarbonate: step 2/3. Its function is as follows. Catalyzes the condensation of carbamoyl phosphate and aspartate to form carbamoyl aspartate and inorganic phosphate, the committed step in the de novo pyrimidine nucleotide biosynthesis pathway. The polypeptide is Aspartate carbamoyltransferase catalytic subunit (Marinomonas sp. (strain MWYL1)).